Here is a 492-residue protein sequence, read N- to C-terminus: Steroid 21-hydroxylase (492 aa).

Positions 92 and 121 each coordinate heme b. Position 232 (R232) interacts with 17alpha-hydroxyprogesterone. R232 is a binding site for progesterone. 3 residues coordinate heme b: H364, R425, and C427.

This sequence belongs to the cytochrome P450 family. It depends on heme b as a cofactor.

Its subcellular location is the endoplasmic reticulum membrane. It localises to the microsome membrane. The enzyme catalyses progesterone + reduced [NADPH--hemoprotein reductase] + O2 = 21-hydroxyprogesterone + oxidized [NADPH--hemoprotein reductase] + H2O + H(+). It carries out the reaction 17alpha-hydroxyprogesterone + reduced [NADPH--hemoprotein reductase] + O2 = 11-deoxycortisol + oxidized [NADPH--hemoprotein reductase] + H2O + H(+). A cytochrome P450 monooxygenase that plays a major role in adrenal steroidogenesis. Catalyzes the hydroxylation at C-21 of progesterone and 17alpha-hydroxyprogesterone to respectively form 11-deoxycorticosterone and 11-deoxycortisol, intermediate metabolites in the biosynthetic pathway of mineralocorticoids and glucocorticoids. Mechanistically, uses molecular oxygen inserting one oxygen atom into a substrate, and reducing the second into a water molecule, with two electrons provided by NADPH via cytochrome P450 reductase (CPR; NADPH-ferrihemoprotein reductase). The sequence is that of Steroid 21-hydroxylase (CYP21) from Sus scrofa (Pig).